An 841-amino-acid chain; its full sequence is Translation initiation factor IF-2 (841 aa).

5 stretches are compositionally biased toward basic and acidic residues: residues 1–12, 52–92, 114–170, 188–202, and 213–235; these read MSDNEIKNEAPK, ALKA…EATK, EQPK…REEA, READRDNDRRSEANR, and KKGDREDKNERNADRRNQKDVKG. Disordered regions lie at residues 1–24 and 52–246; these read MSDNEIKNEAPKKLSLQRRTKTTV and ALKA…GSAL. The region spanning 340 to 510 is the tr-type G domain; the sequence is TRAPVVTIMG…LLQSEVLELT (171 aa). Positions 349 to 356 are G1; that stretch reads GHVDHGKT. 349–356 provides a ligand contact to GTP; that stretch reads GHVDHGKT. A G2 region spans residues 374 to 378; it reads GITQH. The interval 396 to 399 is G3; that stretch reads DTPG. Residues 396–400 and 450–453 contribute to the GTP site; these read DTPGH and NKID. The interval 450 to 453 is G4; it reads NKID. A G5 region spans residues 486–488; the sequence is SAK.

It belongs to the TRAFAC class translation factor GTPase superfamily. Classic translation factor GTPase family. IF-2 subfamily.

The protein resides in the cytoplasm. Functionally, one of the essential components for the initiation of protein synthesis. Protects formylmethionyl-tRNA from spontaneous hydrolysis and promotes its binding to the 30S ribosomal subunits. Also involved in the hydrolysis of GTP during the formation of the 70S ribosomal complex. The polypeptide is Translation initiation factor IF-2 (Actinobacillus pleuropneumoniae serotype 5b (strain L20)).